Consider the following 185-residue polypeptide: Elongation factor P (185 aa).

It belongs to the elongation factor P family.

It localises to the cytoplasm. It functions in the pathway protein biosynthesis; polypeptide chain elongation. Functionally, involved in peptide bond synthesis. Stimulates efficient translation and peptide-bond synthesis on native or reconstituted 70S ribosomes in vitro. Probably functions indirectly by altering the affinity of the ribosome for aminoacyl-tRNA, thus increasing their reactivity as acceptors for peptidyl transferase. The polypeptide is Elongation factor P (Dictyoglomus turgidum (strain DSM 6724 / Z-1310)).